The chain runs to 71 residues: uncharacterized protein (71 aa).

Residues 5–22 form a helical membrane-spanning segment; it reads VVMCSGLFCSVFAGAFML.

It localises to the membrane. This is an uncharacterized protein from Bacillus subtilis (strain 168).